Reading from the N-terminus, the 692-residue chain is Elongation factor G (692 aa).

Positions 8-282 (ENTRNIGIMA…GVVDYLPSPV (275 aa)) constitute a tr-type G domain. Residues 17–24 (AHIDAGKT), 81–85 (DTPGH), and 135–138 (NKMD) each bind GTP.

Belongs to the TRAFAC class translation factor GTPase superfamily. Classic translation factor GTPase family. EF-G/EF-2 subfamily.

Its subcellular location is the cytoplasm. Catalyzes the GTP-dependent ribosomal translocation step during translation elongation. During this step, the ribosome changes from the pre-translocational (PRE) to the post-translocational (POST) state as the newly formed A-site-bound peptidyl-tRNA and P-site-bound deacylated tRNA move to the P and E sites, respectively. Catalyzes the coordinated movement of the two tRNA molecules, the mRNA and conformational changes in the ribosome. This is Elongation factor G from Geobacillus sp. (strain WCH70).